The primary structure comprises 226 residues: 2-C-methyl-D-erythritol 4-phosphate cytidylyltransferase (226 aa).

It belongs to the IspD/TarI cytidylyltransferase family. IspD subfamily.

It catalyses the reaction 2-C-methyl-D-erythritol 4-phosphate + CTP + H(+) = 4-CDP-2-C-methyl-D-erythritol + diphosphate. It functions in the pathway isoprenoid biosynthesis; isopentenyl diphosphate biosynthesis via DXP pathway; isopentenyl diphosphate from 1-deoxy-D-xylulose 5-phosphate: step 2/6. Its function is as follows. Catalyzes the formation of 4-diphosphocytidyl-2-C-methyl-D-erythritol from CTP and 2-C-methyl-D-erythritol 4-phosphate (MEP). The chain is 2-C-methyl-D-erythritol 4-phosphate cytidylyltransferase from Bacillus cytotoxicus (strain DSM 22905 / CIP 110041 / 391-98 / NVH 391-98).